A 138-amino-acid polypeptide reads, in one-letter code: Protein SPMIP3 (138 aa).

The polypeptide is Protein SPMIP3 (SPMIP3) (Bos taurus (Bovine)).